The sequence spans 256 residues: Small ribosomal subunit protein eS1 (256 aa).

An N-acetylalanine; partial modification is found at A2.

Belongs to the eukaryotic ribosomal protein eS1 family. In terms of assembly, component of the small ribosomal subunit. Mature ribosomes consist of a small (40S) and a large (60S) subunit. The 40S subunit contains about 33 different proteins and 1 molecule of RNA (18S). The 60S subunit contains about 49 different proteins and 3 molecules of RNA (25S, 5.8S and 5S).

It is found in the cytoplasm. The protein is Small ribosomal subunit protein eS1 of Komagataella phaffii (strain GS115 / ATCC 20864) (Yeast).